A 62-amino-acid chain; its full sequence is Large ribosomal subunit protein bL28 (62 aa).

The interval 1–27 (MARECYITGRKARSGNKRSHAMNKSKR) is disordered. The span at 10–27 (RKARSGNKRSHAMNKSKR) shows a compositional bias: basic residues.

The protein belongs to the bacterial ribosomal protein bL28 family.

The polypeptide is Large ribosomal subunit protein bL28 (Shouchella clausii (strain KSM-K16) (Alkalihalobacillus clausii)).